The following is a 268-amino-acid chain: Ubiquinone biosynthesis protein COQ4 homolog, mitochondrial (268 aa).

A mitochondrion-targeting transit peptide spans 1–25 (MMQRCLRLQKPLALRRGLHLAQVNS). Residues H171, D172, H175, and E187 each contribute to the Zn(2+) site.

This sequence belongs to the COQ4 family. In terms of assembly, component of a multi-subunit COQ enzyme complex. The cofactor is Zn(2+).

The protein localises to the mitochondrion inner membrane. It carries out the reaction a 4-hydroxy-3-methoxy-5-(all-trans-polyprenyl)benzoate + H(+) = a 2-methoxy-6-(all-trans-polyprenyl)phenol + CO2. The protein operates within cofactor biosynthesis; ubiquinone biosynthesis. Its function is as follows. Lyase that catalyzes the C1-decarboxylation of 4-hydroxy-3-methoxy-5-(all-trans-polyprenyl)benzoic acid into 2-methoxy-6-(all-trans-polyprenyl)phenol during ubiquinone biosynthesis. The protein is Ubiquinone biosynthesis protein COQ4 homolog, mitochondrial of Drosophila simulans (Fruit fly).